Here is a 126-residue protein sequence, read N- to C-terminus: 5-hydroxyisourate hydrolase (126 aa).

Residues His16, Arg54, and Tyr123 each coordinate substrate.

The protein belongs to the transthyretin family. 5-hydroxyisourate hydrolase subfamily. Homotetramer.

It catalyses the reaction 5-hydroxyisourate + H2O = 5-hydroxy-2-oxo-4-ureido-2,5-dihydro-1H-imidazole-5-carboxylate + H(+). In terms of biological role, catalyzes the hydrolysis of 5-hydroxyisourate (HIU) to 2-oxo-4-hydroxy-4-carboxy-5-ureidoimidazoline (OHCU). In Pseudomonas aeruginosa (strain ATCC 15692 / DSM 22644 / CIP 104116 / JCM 14847 / LMG 12228 / 1C / PRS 101 / PAO1), this protein is 5-hydroxyisourate hydrolase.